Here is a 454-residue protein sequence, read N- to C-terminus: Allantoinase (454 aa).

The Zn(2+) site is built by His60, His62, Lys147, His183, His239, and Asp312. Lys147 is modified (N6-carboxylysine).

It belongs to the metallo-dependent hydrolases superfamily. Allantoinase family. Homotetramer. It depends on Zn(2+) as a cofactor. In terms of processing, carboxylation allows a single lysine to coordinate two zinc ions.

The catalysed reaction is (S)-allantoin + H2O = allantoate + H(+). The protein operates within nitrogen metabolism; (S)-allantoin degradation; allantoate from (S)-allantoin: step 1/1. Functionally, catalyzes the conversion of allantoin (5-ureidohydantoin) to allantoic acid by hydrolytic cleavage of the five-member hydantoin ring. This chain is Allantoinase, found in Rubrobacter xylanophilus (strain DSM 9941 / JCM 11954 / NBRC 16129 / PRD-1).